A 211-amino-acid polypeptide reads, in one-letter code: Ribonuclease HII (211 aa).

The RNase H type-2 domain occupies 21-211; it reads SSIAGLDEAG…APLKSMFDVI (191 aa). 3 residues coordinate a divalent metal cation: Asp-27, Glu-28, and Asp-122.

Belongs to the RNase HII family. Mn(2+) is required as a cofactor. The cofactor is Mg(2+).

Its subcellular location is the cytoplasm. The enzyme catalyses Endonucleolytic cleavage to 5'-phosphomonoester.. Endonuclease that specifically degrades the RNA of RNA-DNA hybrids. The protein is Ribonuclease HII of Dehalococcoides mccartyi (strain ATCC BAA-2266 / KCTC 15142 / 195) (Dehalococcoides ethenogenes (strain 195)).